The sequence spans 1651 residues: A.superbus venom factor 2 (1651 aa).

The first 22 residues, 1 to 22, serve as a signal peptide directing secretion; the sequence is MEGMALYLVAALLIGFPGSSHG. N-linked (GlcNAc...) asparagine glycosylation is present at Asn189. Residues Pro519, Asp542, Val543, and Asp545 each contribute to the Mg(2+) site. Intrachain disulfides connect Cys547-Cys808, Cys616-Cys651, Cys684-Cys711, Cys685-Cys718, Cys698-Cys719, Cys864-Cys1501, Cys1346-Cys1477, Cys1377-Cys1446, Cys1494-Cys1499, Cys1506-Cys1578, Cys1525-Cys1649, and Cys1625-Cys1634. Residues 657–739 constitute a propeptide that is removed on maturation; the sequence is RRRRSSVLLL…QRESELFLAR (83 aa). Residues 661 to 739 form a C3a-like domain region; that stretch reads SSVLLLDSKA…QRESELFLAR (79 aa). One can recognise an Anaphylatoxin-like domain in the interval 684 to 719; it reads CCEDGMHENPMGYTCEKRAKYTQEGDACKAAFLECC. The interval 743–754 is factor B binding site; that stretch reads EDEFFEEDNIIS. The propeptide occupies 992-1269; sequence HLIITPSGSG…VMVFQALAEY (278 aa). The tract at residues 992–1269 is C3d-like domain; sequence HLIITPSGSG…VMVFQALAEY (278 aa). A factor H binding site region spans residues 1197-1259; it reads VLMAASTGRD…GGTYGQTQAT (63 aa). 2 N-linked (GlcNAc...) asparagine glycosylation sites follow: Asn1282 and Asn1352. In terms of domain architecture, NTR spans 1506–1649; sequence CSLLNQQKKI…LSNTLTIFGC (144 aa).

This sequence belongs to the venom complement C3 homolog family. In terms of assembly, heterotrimer of alpha, beta and gamma chains; disulfide-linked. Is active with factor B in the presence of factor D. In terms of processing, first processed by the removal of 4 Arg residues by furin-type protease, forming two chains, alpha and gamma/beta precursor, linked by a disulfide bond. This mature AVF is composed of three chains: alpha, gamma and beta. In terms of tissue distribution, expressed by the venom gland.

The protein localises to the secreted. In terms of biological role, complement-activating protein in snake venom. It is a structural and functional analog of complement component C3b, the activated form of C3. It binds factor B (CFB), which is subsequently cleaved by factor D (CFD) to form the bimolecular complex AVF/Bb. AVF/Bb is a C3 convertase that cleaves complement component C3, but not C5 (as do CVF/Bb). This is A.superbus venom factor 2 from Austrelaps superbus (Lowland copperhead snake).